The chain runs to 863 residues: Cilia- and flagella-associated protein 58 (863 aa).

2 coiled-coil regions span residues 107–600 and 631–815; these read TVKE…NERD and QSQY…KQVF. The tract at residues 836–863 is disordered; the sequence is GPSLLDQLPGGSGTGSGGMATGGGVGMS. The span at 845–863 shows a compositional bias: gly residues; sequence GGSGTGSGGMATGGGVGMS.

Belongs to the CFAP58 family.

The protein resides in the cell projection. It is found in the cilium. It localises to the flagellum. In Chlamydomonas reinhardtii (Chlamydomonas smithii), this protein is Cilia- and flagella-associated protein 58.